The sequence spans 1026 residues: Multidrug resistance protein MdtC (1026 aa).

Helical transmembrane passes span 15–35, 333–353, 360–380, 387–407, 431–451, 463–483, 528–548, 853–873, 897–917, 953–973, and 984–1004; these read ILIAAAITLCGILGFRLLPVA, EVEETLAISVALVILVVFLFL, LIPAVAVPVSLIGTFAAMYLC, LSLMALTIATGFVVDDAIVVL, VGFTVISMSLSLVAVFLPLLL, FAVTLSVAIGISLVVSLTLTP, LVGVVFLGTVALNIWLYIAIP, LILIVAAIATVYIVLGILYES, LFNAPFSLIALIGIMLLIGIV, PIMMTTLAALFGALPLVLSDG, and ITIVGGLVMSQLLTLYTTPVV.

This sequence belongs to the resistance-nodulation-cell division (RND) (TC 2.A.6) family. MdtC subfamily. Part of a tripartite efflux system composed of MdtA, MdtB and MdtC. MdtC forms a heteromultimer with MdtB.

It localises to the cell inner membrane. In Salmonella heidelberg (strain SL476), this protein is Multidrug resistance protein MdtC.